The sequence spans 820 residues: Serine/threonine-protein phosphatase 4 regulatory subunit 3B (820 aa).

Residues 1-100 (MSDTRRRVKV…DEIWEKICQV (100 aa)) enclose the WH1 domain. Phosphoserine is present on residues Ser117 and Ser663. Positions 687 to 820 (EDDDEEGKAV…SPRKRPRLGS (134 aa)) are disordered. The span at 701-732 (EKSKTEDDFPDSYEKFMETKKAKESEDKENLP) shows a compositional bias: basic and acidic residues. Residues 744–789 (FSHSPSATNGTNSTNSKSVVSQTTPASSNVASSKTTSLATSVTATK) are compositionally biased toward polar residues. Positions 798–809 (YPDDEEEDEEEE) are enriched in acidic residues. Ser811 carries the phosphoserine modification.

Belongs to the SMEK family. As to quaternary structure, serine/threonine-protein phosphatase 4 (PP4) occurs in different assemblies of the catalytic and one or more regulatory subunits. Component of the PP4 complex PPP4C-PPP4R2-PPP4R3B.

The protein resides in the cytoplasm. It is found in the cytoskeleton. The protein localises to the microtubule organizing center. It localises to the centrosome. Its subcellular location is the nucleus. Its function is as follows. Regulatory subunit of serine/threonine-protein phosphatase 4 (PP4). May regulate the activity of PPP4C at centrosomal microtubule organizing centers. The chain is Serine/threonine-protein phosphatase 4 regulatory subunit 3B from Mus musculus (Mouse).